Consider the following 89-residue polypeptide: Small ribosomal subunit protein uS17 (89 aa).

It belongs to the universal ribosomal protein uS17 family. In terms of assembly, part of the 30S ribosomal subunit.

One of the primary rRNA binding proteins, it binds specifically to the 5'-end of 16S ribosomal RNA. The sequence is that of Small ribosomal subunit protein uS17 from Stenotrophomonas maltophilia (strain K279a).